Reading from the N-terminus, the 193-residue chain is uncharacterized protein (193 aa).

This is an uncharacterized protein from Acidianus convivator (ATV).